Consider the following 408-residue polypeptide: LL-diaminopimelate aminotransferase (408 aa).

Positions 15 and 42 each coordinate substrate. Pyridoxal 5'-phosphate contacts are provided by residues Tyr-72, Ser-108–Lys-109, Tyr-132, Asn-187, Tyr-218, and Ser-246–Ser-248. The substrate site is built by Lys-109, Tyr-132, and Asn-187. Lys-249 is modified (N6-(pyridoxal phosphate)lysine). Residues Arg-257 and Asn-291 each coordinate pyridoxal 5'-phosphate. Residues Asn-291 and Arg-387 each contribute to the substrate site.

It belongs to the class-I pyridoxal-phosphate-dependent aminotransferase family. LL-diaminopimelate aminotransferase subfamily. Homodimer. Pyridoxal 5'-phosphate serves as cofactor.

The enzyme catalyses (2S,6S)-2,6-diaminopimelate + 2-oxoglutarate = (S)-2,3,4,5-tetrahydrodipicolinate + L-glutamate + H2O + H(+). It participates in amino-acid biosynthesis; L-lysine biosynthesis via DAP pathway; LL-2,6-diaminopimelate from (S)-tetrahydrodipicolinate (aminotransferase route): step 1/1. Its function is as follows. Involved in the synthesis of meso-diaminopimelate (m-DAP or DL-DAP), required for both lysine and peptidoglycan biosynthesis. Catalyzes the direct conversion of tetrahydrodipicolinate to LL-diaminopimelate. The chain is LL-diaminopimelate aminotransferase from Prochlorococcus marinus (strain NATL2A).